A 138-amino-acid chain; its full sequence is Large ribosomal subunit protein uL16 (138 aa).

The protein belongs to the universal ribosomal protein uL16 family. Part of the 50S ribosomal subunit.

In terms of biological role, binds 23S rRNA and is also seen to make contacts with the A and possibly P site tRNAs. The protein is Large ribosomal subunit protein uL16 of Hyphomonas neptunium (strain ATCC 15444).